Here is a 210-residue protein sequence, read N- to C-terminus: ATP-dependent Clp protease proteolytic subunit (210 aa).

The active-site Nucleophile is the Ser106. Residue His131 is part of the active site.

Belongs to the peptidase S14 family. Fourteen ClpP subunits assemble into 2 heptameric rings which stack back to back to give a disk-like structure with a central cavity, resembling the structure of eukaryotic proteasomes.

It localises to the cytoplasm. The catalysed reaction is Hydrolysis of proteins to small peptides in the presence of ATP and magnesium. alpha-casein is the usual test substrate. In the absence of ATP, only oligopeptides shorter than five residues are hydrolyzed (such as succinyl-Leu-Tyr-|-NHMec, and Leu-Tyr-Leu-|-Tyr-Trp, in which cleavage of the -Tyr-|-Leu- and -Tyr-|-Trp bonds also occurs).. Cleaves peptides in various proteins in a process that requires ATP hydrolysis. Has a chymotrypsin-like activity. Plays a major role in the degradation of misfolded proteins. This is ATP-dependent Clp protease proteolytic subunit from Bradyrhizobium sp. (strain BTAi1 / ATCC BAA-1182).